We begin with the raw amino-acid sequence, 599 residues long: NTPase KAP family P-loop domain-containing protein 1 (599 aa).

Residues 1–416 (MQQEAAQRES…NTVPITVRLL (416 aa)) form the KAP NTPase domain. 3 consecutive transmembrane segments (helical) span residues 25-45 (GWGV…ITEL), 119-139 (VCLA…LLYL), and 156-176 (ALGG…VYSV). The disordered stretch occupies residues 543–599 (ALKPPSPPKSPSQDGPQASPRAIIAAGTSHAGQGSGHSKEAHQTRDRTHGGKPRPMA). The span at 579-591 (HSKEAHQTRDRTH) shows a compositional bias: basic and acidic residues.

The protein resides in the membrane. The chain is NTPase KAP family P-loop domain-containing protein 1 (Nkpd1) from Mus musculus (Mouse).